The sequence spans 295 residues: AP-1-like transcription factor YAP4 (295 aa).

A phosphoserine mark is found at S85, S89, and S196. Residues 181–202 (ASYFPSNSTPATRKNSATTNLP) show a composition bias toward polar residues. The disordered stretch occupies residues 181-205 (ASYFPSNSTPATRKNSATTNLPSEE). The 59-residue stretch at 237 to 295 (PLRNTKRAAQNRSAQKAFRQRREKYIKNLEEKSKLFDGLMKENSELKKMIESLKSKLKE) folds into the bZIP domain. Residues 239–260 (RNTKRAAQNRSAQKAFRQRREK) form a basic motif region. The leucine-zipper stretch occupies residues 262–271 (IKNLEEKSKL).

This sequence belongs to the bZIP family. YAP subfamily. In terms of assembly, homodimer.

The protein localises to the cytoplasm. Its subcellular location is the nucleus. Transcription activator involved in the regulation of genes expressed in response to environmental changes and metabolic requirements. According to genome-wide promoter binding and gene expression studies it regulates, among others, genes involved in ribosome biogenesis, and protein synthesis. It may also be involved in pleiotropic drug resistance. When overexpressed it confers increased resistance to cisplatin, the DNA-alkylating agents methylmethanosulfonate, and mitomycin C, the antimalarial drugs quinidine, mefloquine, and chloroquine, and increases cellular tolerance to sodium and lithium. Preferentially binds 5'-TTACTAA-3'. The sequence is that of AP-1-like transcription factor YAP4 (CIN5) from Saccharomyces cerevisiae (strain ATCC 204508 / S288c) (Baker's yeast).